Consider the following 933-residue polypeptide: Clumping factor A (933 aa).

Residues 1–39 form the signal peptide; sequence MNMKKKEKHAIRKKSIGVASVLVGTLIGFGLLSSKEADA. The short motif at 9–20 is the YSIRK-G/S signaling motif element; sequence HAIRKKSIGVAS. 2 disordered regions span residues 34-200 and 529-904; these read SKEA…SNKD and FNNG…SEDE. A ligand binding A region region spans residues 40–542; sequence SENSVTQSDS…SGSGDGIDKP (503 aa). Residues 47-65 show a composition bias toward low complexity; sequence SDSASNESKSNDSSSVSAA. A compositionally biased stretch (polar residues) spans 71–105; the sequence is TNVSDTKTSSNTNNGETSVAQNPAQQETTQSSSTN. 2 stretches are compositionally biased toward low complexity: residues 106-132 and 143-162; these read ATTEETPVTGEATTTTTNQANTPATTQ and NQTSNETTSNDTNTVSSVNS. A compositionally biased stretch (polar residues) spans 163 to 200; sequence PQNSTNAENVSTTQDTSTEATPSNNESAPQSTDASNKD. Residues 547–565 show a composition bias toward acidic residues; sequence QPDEPGEIEPIPEDSDSDP. Residues 566-598 are compositionally biased toward low complexity; it reads GSDSGSDSNSDSGSDSGSDSTSDSGSDSASDSD. Residues 599–861 are compositionally biased toward acidic residues; the sequence is SASDSDSASD…DSDSESDSNS (263 aa). Residues 862 to 880 are compositionally biased toward low complexity; it reads DSESGSNNNVVPPNSPKNG. Residues 887–896 show a composition bias toward basic and acidic residues; it reads NEAKDSKEPL. The short motif at 896 to 900 is the LPXTG sorting signal element; the sequence is LPDTG. T899 carries the pentaglycyl murein peptidoglycan amidated threonine modification. Residues 900-933 constitute a propeptide, removed by sortase; the sequence is GSEDEANTSLIWGLLASIGSLLLFRRKKENKDKK.

The protein belongs to the serine-aspartate repeat-containing protein (SDr) family.

It localises to the secreted. Its subcellular location is the cell wall. In terms of biological role, cell surface-associated protein implicated in virulence. Promotes bacterial attachment exclusively to the gamma-chain of human fibrinogen. Induces formation of bacterial clumps. The protein is Clumping factor A (clfA) of Staphylococcus aureus (strain COL).